Reading from the N-terminus, the 116-residue chain is uncharacterized protein (116 aa).

This is an uncharacterized protein from Saccharomyces cerevisiae (strain ATCC 204508 / S288c) (Baker's yeast).